The primary structure comprises 464 residues: Macrophage metalloelastase (464 aa).

An N-terminal signal peptide occupies residues 1-17; it reads MKFLLLILTLWVTSSGA. Residues 18–100 constitute a propeptide, activation peptide; that stretch reads DPLKENDMLF…DVYHFKTMPG (83 aa). N-linked (GlcNAc...) asparagine glycosylation occurs at asparagine 69. Positions 85–92 match the Cysteine switch motif; that stretch reads PRCGVPDV. Cysteine 87 lines the Zn(2+) pocket. Residues aspartate 119 and aspartate 153 each contribute to the Ca(2+) site. Histidine 163 and aspartate 165 together coordinate Zn(2+). Ca(2+) is bound by residues aspartate 170, glycine 171, glycine 173, and valine 175. Histidine 178 contacts Zn(2+). 3 residues coordinate Ca(2+): glycine 185, glycine 187, and aspartate 189. Zn(2+) is bound at residue histidine 191. Ca(2+) is bound by residues aspartate 193, glutamate 194, and glutamate 196. Histidine 213 provides a ligand contact to Zn(2+). Glutamate 214 is an active-site residue. Residues histidine 217 and histidine 223 each contribute to the Zn(2+) site. Hemopexin repeat units follow at residues 274 to 323, 324 to 370, 372 to 420, and 421 to 464; these read PTAC…WPTL, PSGI…GFPD, VKKI…FPGI, and GPKI…WFDC. An intrachain disulfide couples cysteine 277 to cysteine 464. Ca(2+)-binding residues include aspartate 284, glutamate 328, aspartate 376, and aspartate 425.

The protein belongs to the peptidase M10A family. Ca(2+) serves as cofactor. It depends on Zn(2+) as a cofactor.

It localises to the secreted. The protein resides in the extracellular space. The protein localises to the extracellular matrix. The enzyme catalyses Hydrolysis of soluble and insoluble elastin. Specific cleavages are also produced at 14-Ala-|-Leu-15 and 16-Tyr-|-Leu-17 in the B chain of insulin.. May be involved in tissue injury and remodeling. Has significant elastolytic activity. Can accept large and small amino acids at the P1' site, but has a preference for leucine. Aromatic or hydrophobic residues are preferred at the P1 site, with small hydrophobic residues (preferably alanine) occupying P3. The chain is Macrophage metalloelastase (MMP12) from Oryctolagus cuniculus (Rabbit).